The primary structure comprises 424 residues: UPF0229 protein Sde_0732 (424 aa).

The disordered stretch occupies residues 52-109; that stretch reads IGIPSKDISEPVFHHDSGGVDTRVLPGNDQFHSGDRIQRPPSGQGGGGSGKGASDSGE. Positions 58–69 are enriched in basic and acidic residues; the sequence is DISEPVFHHDSG.

This sequence belongs to the UPF0229 family.

The chain is UPF0229 protein Sde_0732 from Saccharophagus degradans (strain 2-40 / ATCC 43961 / DSM 17024).